A 290-amino-acid polypeptide reads, in one-letter code: uncharacterized protein (290 aa).

2 disordered regions span residues 105-156 and 259-290; these read LKHK…KLTV and EGAQ…KSKK. Residues 114–130 show a composition bias toward polar residues; it reads KATQQARKRNFISSKSK. Basic and acidic residues-rich tracts occupy residues 143 to 156 and 261 to 280; these read RESK…KLTV and AQRD…EPVL.

This is an uncharacterized protein from Homo sapiens (Human).